Consider the following 152-residue polypeptide: SsrA-binding protein (152 aa).

A disordered region spans residues 122 to 152; it reads KGKKNHDKRETEAARDWQRDKARLMKGDRGD. Positions 128 to 152 are enriched in basic and acidic residues; it reads DKRETEAARDWQRDKARLMKGDRGD.

The protein belongs to the SmpB family.

The protein localises to the cytoplasm. Its function is as follows. Required for rescue of stalled ribosomes mediated by trans-translation. Binds to transfer-messenger RNA (tmRNA), required for stable association of tmRNA with ribosomes. tmRNA and SmpB together mimic tRNA shape, replacing the anticodon stem-loop with SmpB. tmRNA is encoded by the ssrA gene; the 2 termini fold to resemble tRNA(Ala) and it encodes a 'tag peptide', a short internal open reading frame. During trans-translation Ala-aminoacylated tmRNA acts like a tRNA, entering the A-site of stalled ribosomes, displacing the stalled mRNA. The ribosome then switches to translate the ORF on the tmRNA; the nascent peptide is terminated with the 'tag peptide' encoded by the tmRNA and targeted for degradation. The ribosome is freed to recommence translation, which seems to be the essential function of trans-translation. This chain is SsrA-binding protein, found in Caulobacter sp. (strain K31).